Reading from the N-terminus, the 510-residue chain is GMP synthase [glutamine-hydrolyzing] (510 aa).

The region spanning P5 to N195 is the Glutamine amidotransferase type-1 domain. Residue C82 is the Nucleophile of the active site. Catalysis depends on residues H169 and E171. In terms of domain architecture, GMPS ATP-PPase spans W196–R385. S223–T229 contributes to the ATP binding site.

Homodimer.

It catalyses the reaction XMP + L-glutamine + ATP + H2O = GMP + L-glutamate + AMP + diphosphate + 2 H(+). The protein operates within purine metabolism; GMP biosynthesis; GMP from XMP (L-Gln route): step 1/1. Its function is as follows. Catalyzes the synthesis of GMP from XMP. In Aquifex aeolicus (strain VF5), this protein is GMP synthase [glutamine-hydrolyzing] (guaA).